Reading from the N-terminus, the 325-residue chain is Succinylglutamate desuccinylase (325 aa).

3 residues coordinate Zn(2+): His51, Glu54, and His148. The active site involves Glu211.

The protein belongs to the AspA/AstE family. Succinylglutamate desuccinylase subfamily. Zn(2+) is required as a cofactor.

The catalysed reaction is N-succinyl-L-glutamate + H2O = L-glutamate + succinate. It participates in amino-acid degradation; L-arginine degradation via AST pathway; L-glutamate and succinate from L-arginine: step 5/5. In terms of biological role, transforms N(2)-succinylglutamate into succinate and glutamate. The polypeptide is Succinylglutamate desuccinylase (Photorhabdus laumondii subsp. laumondii (strain DSM 15139 / CIP 105565 / TT01) (Photorhabdus luminescens subsp. laumondii)).